Reading from the N-terminus, the 638-residue chain is RNA exonuclease 3 (638 aa).

The segment at 37 to 136 (AQDQVLEQKE…PPRRAPKEAL (100 aa)) is disordered. A compositionally biased stretch (basic and acidic residues) spans 55–76 (LKLEPRPEAKETPKDDLRHVSD). Residues 77-111 (SGRSTPVKKTTAPATNAENISPVSRQPNIPKNTAT) show a composition bias toward polar residues. Residues 408 to 584 (ICFDCEMGYT…VEDALATGDL (177 aa)) form the Exonuclease domain. A compositionally biased stretch (polar residues) spans 612–622 (DSSSNTVSMQT). The interval 612–638 (DSSSNTVSMQTKLGEGAGAKRAREGTS) is disordered.

Belongs to the REXO1/REXO3 family.

It is found in the cytoplasm. The protein localises to the nucleus. Its function is as follows. 3' to 5' exoribonuclease required for proper 3' end maturation of MRP RNA and of the U5L snRNA. This chain is RNA exonuclease 3 (rex3), found in Emericella nidulans (strain FGSC A4 / ATCC 38163 / CBS 112.46 / NRRL 194 / M139) (Aspergillus nidulans).